We begin with the raw amino-acid sequence, 375 residues long: Beta sliding clamp (375 aa).

The protein belongs to the beta sliding clamp family. Forms a ring-shaped head-to-tail homodimer around DNA which binds and tethers DNA polymerases and other proteins to the DNA. The DNA replisome complex has a single clamp-loading complex (3 tau and 1 each of delta, delta', psi and chi subunits) which binds 3 Pol III cores (1 core on the leading strand and 2 on the lagging strand) each with a beta sliding clamp dimer. Additional proteins in the replisome are other copies of gamma, psi and chi, Ssb, DNA helicase and RNA primase.

The protein resides in the cytoplasm. In terms of biological role, confers DNA tethering and processivity to DNA polymerases and other proteins. Acts as a clamp, forming a ring around DNA (a reaction catalyzed by the clamp-loading complex) which diffuses in an ATP-independent manner freely and bidirectionally along dsDNA. Initially characterized for its ability to contact the catalytic subunit of DNA polymerase III (Pol III), a complex, multichain enzyme responsible for most of the replicative synthesis in bacteria; Pol III exhibits 3'-5' exonuclease proofreading activity. The beta chain is required for initiation of replication as well as for processivity of DNA replication. This chain is Beta sliding clamp (dnaN), found in Synechococcus elongatus (strain ATCC 33912 / PCC 7942 / FACHB-805) (Anacystis nidulans R2).